The following is a 337-amino-acid chain: Ribosomal RNA small subunit methyltransferase C (337 aa).

This sequence belongs to the methyltransferase superfamily. RsmC family. As to quaternary structure, monomer.

Its subcellular location is the cytoplasm. It catalyses the reaction guanosine(1207) in 16S rRNA + S-adenosyl-L-methionine = N(2)-methylguanosine(1207) in 16S rRNA + S-adenosyl-L-homocysteine + H(+). Specifically methylates the guanine in position 1207 of 16S rRNA in the 30S particle. The sequence is that of Ribosomal RNA small subunit methyltransferase C from Proteus mirabilis (strain HI4320).